The chain runs to 151 residues: MIQELKADLNGKGQKHCVIVSRFNEFITESLLKGALESFRMHGVEDVTVVRVPGAYEMPMVVSKAAASKKYDSIVCLGAVIRGATAHFDLVAGESAKIGSIGVQHSIPVIFGVLTTDTIEQAIERAGTKAGNKGAEAAATAVEMVNLLSLL.

Residues Phe23, 55–57 (AYE), and 79–81 (AVI) contribute to the 5-amino-6-(D-ribitylamino)uracil site. Residue 84 to 85 (AT) participates in (2S)-2-hydroxy-3-oxobutyl phosphate binding. The active-site Proton donor is the His87. A 5-amino-6-(D-ribitylamino)uracil-binding site is contributed by Phe111. Arg125 is a (2S)-2-hydroxy-3-oxobutyl phosphate binding site.

It belongs to the DMRL synthase family.

The enzyme catalyses (2S)-2-hydroxy-3-oxobutyl phosphate + 5-amino-6-(D-ribitylamino)uracil = 6,7-dimethyl-8-(1-D-ribityl)lumazine + phosphate + 2 H2O + H(+). It functions in the pathway cofactor biosynthesis; riboflavin biosynthesis; riboflavin from 2-hydroxy-3-oxobutyl phosphate and 5-amino-6-(D-ribitylamino)uracil: step 1/2. In terms of biological role, catalyzes the formation of 6,7-dimethyl-8-ribityllumazine by condensation of 5-amino-6-(D-ribitylamino)uracil with 3,4-dihydroxy-2-butanone 4-phosphate. This is the penultimate step in the biosynthesis of riboflavin. The sequence is that of 6,7-dimethyl-8-ribityllumazine synthase from Leptospira interrogans serogroup Icterohaemorrhagiae serovar Lai (strain 56601).